Here is a 63-residue protein sequence, read N- to C-terminus: Cytochrome c oxidase subunit 5A, mitochondrial (63 aa).

This sequence belongs to the cytochrome c oxidase subunit 5A family. In terms of assembly, component of the cytochrome c oxidase (complex IV, CIV), a multisubunit enzyme composed of a catalytic core of 3 subunits and several supernumerary subunits. The complex exists as a monomer or a dimer and forms supercomplexes (SCs) in the inner mitochondrial membrane with ubiquinol-cytochrome c oxidoreductase (cytochrome b-c1 complex, complex III, CIII).

It is found in the mitochondrion inner membrane. The protein operates within energy metabolism; oxidative phosphorylation. Component of the cytochrome c oxidase, the last enzyme in the mitochondrial electron transport chain which drives oxidative phosphorylation. The respiratory chain contains 3 multisubunit complexes succinate dehydrogenase (complex II, CII), ubiquinol-cytochrome c oxidoreductase (cytochrome b-c1 complex, complex III, CIII) and cytochrome c oxidase (complex IV, CIV), that cooperate to transfer electrons derived from NADH and succinate to molecular oxygen, creating an electrochemical gradient over the inner membrane that drives transmembrane transport and the ATP synthase. Cytochrome c oxidase is the component of the respiratory chain that catalyzes the reduction of oxygen to water. Electrons originating from reduced cytochrome c in the intermembrane space (IMS) are transferred via the dinuclear copper A center (CU(A)) of subunit 2 and heme A of subunit 1 to the active site in subunit 1, a binuclear center (BNC) formed by heme A3 and copper B (CU(B)). The BNC reduces molecular oxygen to 2 water molecules using 4 electrons from cytochrome c in the IMS and 4 protons from the mitochondrial matrix. This chain is Cytochrome c oxidase subunit 5A, mitochondrial (COVA), found in Manduca sexta (Tobacco hawkmoth).